We begin with the raw amino-acid sequence, 156 residues long: SsrA-binding protein (156 aa).

A disordered region spans residues 131–156; sequence YDKRQTLREQQDKREALRVMRERNRG.

This sequence belongs to the SmpB family.

It localises to the cytoplasm. Required for rescue of stalled ribosomes mediated by trans-translation. Binds to transfer-messenger RNA (tmRNA), required for stable association of tmRNA with ribosomes. tmRNA and SmpB together mimic tRNA shape, replacing the anticodon stem-loop with SmpB. tmRNA is encoded by the ssrA gene; the 2 termini fold to resemble tRNA(Ala) and it encodes a 'tag peptide', a short internal open reading frame. During trans-translation Ala-aminoacylated tmRNA acts like a tRNA, entering the A-site of stalled ribosomes, displacing the stalled mRNA. The ribosome then switches to translate the ORF on the tmRNA; the nascent peptide is terminated with the 'tag peptide' encoded by the tmRNA and targeted for degradation. The ribosome is freed to recommence translation, which seems to be the essential function of trans-translation. This chain is SsrA-binding protein, found in Arthrobacter sp. (strain FB24).